The sequence spans 131 residues: Holo-[acyl-carrier-protein] synthase (131 aa).

Residues Asp-8 and Glu-59 each contribute to the Mg(2+) site.

It belongs to the P-Pant transferase superfamily. AcpS family. Requires Mg(2+) as cofactor.

It is found in the cytoplasm. It carries out the reaction apo-[ACP] + CoA = holo-[ACP] + adenosine 3',5'-bisphosphate + H(+). Transfers the 4'-phosphopantetheine moiety from coenzyme A to a Ser of acyl-carrier-protein. This Rickettsia africae (strain ESF-5) protein is Holo-[acyl-carrier-protein] synthase.